The chain runs to 338 residues: Eukaryotic translation initiation factor 3 subunit H (338 aa).

Residues 22-154 (VQCDGLAVMK…LKAYRLTPQA (133 aa)) form the MPN domain.

The protein belongs to the eIF-3 subunit H family. As to quaternary structure, component of the eukaryotic translation initiation factor 3 (eIF-3) complex. The eIF-3 complex interacts with pix. Interacts with mxt.

The protein resides in the cytoplasm. Component of the eukaryotic translation initiation factor 3 (eIF-3) complex, which is involved in protein synthesis of a specialized repertoire of mRNAs and, together with other initiation factors, stimulates binding of mRNA and methionyl-tRNAi to the 40S ribosome. The eIF-3 complex specifically targets and initiates translation of a subset of mRNAs involved in cell proliferation. The protein is Eukaryotic translation initiation factor 3 subunit H of Drosophila erecta (Fruit fly).